The primary structure comprises 100 residues: Osteocalcin (100 aa).

Residues Met-1–Ala-23 form the signal peptide. Positions Lys-24–Arg-51 are excised as a propeptide. Residues Tyr-52–Gly-98 form the Gla domain. At Pro-60 the chain carries 4-hydroxyproline. Residues Glu-68, Glu-72, Glu-75, and Asp-81 each contribute to the Ca(2+) site. A 4-carboxyglutamate mark is found at Glu-68, Glu-72, and Glu-75. A disulfide bond links Cys-74 and Cys-80.

Belongs to the osteocalcin/matrix Gla protein family. Gamma-carboxyglutamate residues are formed by vitamin K dependent carboxylation by GGCX. These residues are essential for the binding of calcium. Decarboxylation promotes the hormone activity.

The protein localises to the secreted. The carboxylated form is one of the main organic components of the bone matrix, which constitutes 1-2% of the total bone protein: it acts as a negative regulator of bone formation and is required to limit bone formation without impairing bone resorption or mineralization. The carboxylated form binds strongly to apatite and calcium. In terms of biological role, the uncarboxylated form acts as a hormone secreted by osteoblasts, which regulates different cellular processes, such as energy metabolism, male fertility and brain development. Regulates of energy metabolism by acting as a hormone favoring pancreatic beta-cell proliferation, insulin secretion and sensitivity and energy expenditure. Uncarboxylated osteocalcin hormone also promotes testosterone production in the testes: acts as a ligand for G protein-coupled receptor GPRC6A at the surface of Leydig cells, initiating a signaling response that promotes the expression of enzymes required for testosterone synthesis in a CREB-dependent manner. Also acts as a regulator of brain development: osteocalcin hormone crosses the blood-brain barrier and acts as a ligand for GPR158 on neurons, initiating a signaling response that prevents neuronal apoptosis in the hippocampus, favors the synthesis of all monoamine neurotransmitters and inhibits that of gamma-aminobutyric acid (GABA). Osteocalcin also crosses the placenta during pregnancy and maternal osteocalcin is required for fetal brain development. This chain is Osteocalcin (BGLAP), found in Macaca mulatta (Rhesus macaque).